The sequence spans 284 residues: 2-dehydro-3-deoxyphosphooctonate aldolase (284 aa).

This sequence belongs to the KdsA family.

The protein localises to the cytoplasm. The catalysed reaction is D-arabinose 5-phosphate + phosphoenolpyruvate + H2O = 3-deoxy-alpha-D-manno-2-octulosonate-8-phosphate + phosphate. Its pathway is carbohydrate biosynthesis; 3-deoxy-D-manno-octulosonate biosynthesis; 3-deoxy-D-manno-octulosonate from D-ribulose 5-phosphate: step 2/3. It participates in bacterial outer membrane biogenesis; lipopolysaccharide biosynthesis. The protein is 2-dehydro-3-deoxyphosphooctonate aldolase of Pectobacterium atrosepticum (strain SCRI 1043 / ATCC BAA-672) (Erwinia carotovora subsp. atroseptica).